The following is a 266-amino-acid chain: DNA-directed RNA polymerase subunit Rpo3 (266 aa).

Cys-205, Cys-208, and Cys-211 together coordinate [3Fe-4S] cluster.

It belongs to the archaeal Rpo3/eukaryotic RPB3 RNA polymerase subunit family. Part of the RNA polymerase complex. [3Fe-4S] cluster is required as a cofactor.

The protein localises to the cytoplasm. The enzyme catalyses RNA(n) + a ribonucleoside 5'-triphosphate = RNA(n+1) + diphosphate. Functionally, DNA-dependent RNA polymerase (RNAP) catalyzes the transcription of DNA into RNA using the four ribonucleoside triphosphates as substrates. This is DNA-directed RNA polymerase subunit Rpo3 from Methanosarcina acetivorans (strain ATCC 35395 / DSM 2834 / JCM 12185 / C2A).